The chain runs to 567 residues: MASSALICDTEQWKGLQAHVGAIQKTHLRDLMDDAERCKAMTAEYEGIFLDYSRQRATGETMEKLFKLAEAAKLKEKIEKMFSGDKINSTENRSVLHVALRAPRDEVIKSDGVNVVPEVWGVKDKIKQFSETFRSGSWVGATGKALTNVVSVGIGGSFLGPLFVHAALQTDPEAAESAKGRQLRFLANVDPVDVARSIKDLDPETTLVVVVSKTFTTAETMLNARTLKEWIVSSLGPDAVAKHMIAVSTNLELVEKFGIDPKNAFAFWDWVGGRYSVCSAVGVLPLSLQYGFPIVQKFLEGAASIDKHFRSSSFEKNIPVLLGLLSVWNVSFLGYPARAILPYSQALEKFAPHIQQLSMESNGKGVSIDGVQLSFETGEIDFGEPGTNGQHSFYQLIHQGRVIPCDFIGVVKSQQPVYLKGEIVSNHDELMSNFFAQPDALAYGKTPEQLHSEKVPEHLISHKTFQGNRPSLSLLLPSLSAYEIGQLLSIYEHRIAVQGFLWGINSFDQWGVELGKSLASQVRKSLHASRMEGKPVQGFNSSTASLLTRYLAVEPSTPYNTTTMPKV.

Residues 156–157 (GS), 212–217 (SKTFTT), Gln356, Glu360, His391, and Lys516 each bind D-glucose 6-phosphate. Catalysis depends on Glu360, which acts as the Proton donor. Catalysis depends on residues His391 and Lys516.

It belongs to the GPI family. Homodimer.

It localises to the cytoplasm. The enzyme catalyses alpha-D-glucose 6-phosphate = beta-D-fructose 6-phosphate. It functions in the pathway carbohydrate degradation; glycolysis; D-glyceraldehyde 3-phosphate and glycerone phosphate from D-glucose: step 2/4. Its function is as follows. Catalyzes the conversion of glucose-6-phosphate to fructose-6-phosphate, the second step in glycolysis, and the reverse reaction during gluconeogenesis. In Oryza sativa subsp. japonica (Rice), this protein is Glucose-6-phosphate isomerase, cytosolic B.